The primary structure comprises 178 residues: MHSSALLCCLVLLTGVRASPGQGTQSENSCTRFPGNLPHMLRDLRDAFSRVKTFFQMKDQLDNILLKESLLEDFKGYLGCQALSEMIQFYLEEVMPQAENHDPDIKEHVNSLGENLKTLRLRLRRCHRFLPCENKSKAVEQVKNAFSKLQEKGVYKAMSEFDIFINYIEAYMTMKIQN.

The N-terminal stretch at 1–18 (MHSSALLCCLVLLTGVRA) is a signal peptide. Disulfide bonds link Cys-30/Cys-126 and Cys-80/Cys-132. Asn-134 is a glycosylation site (N-linked (GlcNAc...) asparagine).

Belongs to the IL-10 family. As to quaternary structure, homodimer. Interacts with IL10RA and IL10RB.

It localises to the secreted. Functionally, major immune regulatory cytokine that acts on many cells of the immune system where it has profound anti-inflammatory functions, limiting excessive tissue disruption caused by inflammation. Mechanistically, IL10 binds to its heterotetrameric receptor comprising IL10RA and IL10RB leading to JAK1 and STAT2-mediated phosphorylation of STAT3. In turn, STAT3 translocates to the nucleus where it drives expression of anti-inflammatory mediators. Targets antigen-presenting cells (APCs) such as macrophages and monocytes and inhibits their release of pro-inflammatory cytokines including granulocyte-macrophage colony-stimulating factor /GM-CSF, granulocyte colony-stimulating factor/G-CSF, IL-1 alpha, IL-1 beta, IL-6, IL-8 and TNF-alpha. Also interferes with antigen presentation by reducing the expression of MHC-class II and co-stimulatory molecules, thereby inhibiting their ability to induce T cell activation. In addition, controls the inflammatory response of macrophages by reprogramming essential metabolic pathways including mTOR signaling. This chain is Interleukin-10 (IL10), found in Macaca mulatta (Rhesus macaque).